A 397-amino-acid polypeptide reads, in one-letter code: F-box protein At5g25290 (397 aa).

In terms of domain architecture, F-box spans 11-56 (VTLWSEIPMDILRSVFERLSFVDLHRAKIVCSHWYSCSKQSFLRKT).

The chain is F-box protein At5g25290 from Arabidopsis thaliana (Mouse-ear cress).